The following is a 503-amino-acid chain: Probable dolichyl pyrophosphate Man9GlcNAc2 alpha-1,3-glucosyltransferase (503 aa).

At 1 to 46 (MKERIKDKAWRPQFIKLNNPDTSKKIVSQKSKKPEIVDLSSPGNND) the chain is on the cytoplasmic side. The helical transmembrane segment at 47 to 67 (LVTISILCVLLCFQLAISLNP) threads the bilayer. The Lumenal segment spans residues 68–151 (HSGESQPPMY…SRGYESIAHK (84 aa)). A helical membrane pass occupies residues 152-172 (LFMRLSAIIPFYIFYLPPLIF). The Cytoplasmic portion of the chain corresponds to 173-181 (YFTRSKKMS). A helical transmembrane segment spans residues 182–202 (PILYALALLYPSLLVIDNGHF). The Lumenal segment spans residues 203–211 (QYNSISLGL). A helical membrane pass occupies residues 212 to 232 (FLATYMFLTKNFTIIGSILFV). Residues 233 to 239 (AALNYKQ) lie on the Cytoplasmic side of the membrane. Residues 240–257 (MELYHALPVFVFILARSI) traverse the membrane as a helical segment. Residues 258 to 268 (NKTQLFNSFRR) lie on the Lumenal side of the membrane. A helical membrane pass occupies residues 269–289 (ILTIGLFVVGTFLIIWLPFLL). Residues 290-332 (TGTAKDVIIRVFPFNRGLYEDKVASFWCAFSFILKRLPLQSVQ) are Cytoplasmic-facing. A helical membrane pass occupies residues 333-353 (IYISTALVLAGSAPSLLVLFL). Residues 354–359 (RPTEKQ) lie on the Lumenal side of the membrane. Residues 360-379 (FRISLTATGLSFFLFSFHVH) form a helical membrane-spanning segment. The Cytoplasmic portion of the chain corresponds to 380-382 (EKT). A helical transmembrane segment spans residues 383–403 (ILLAAVPALLLISEYTSLVIW). The Lumenal segment spans residues 404–420 (FLNITNISIFSLCVKDN). A helical transmembrane segment spans residues 421 to 441 (FALSLSFFFAYFVVSYAYTAP). The Cytoplasmic portion of the chain corresponds to 442–443 (RK). Residues 444–464 (ISHILTILIGFAICILELYGP) traverse the membrane as a helical segment. The Lumenal segment spans residues 465-474 (SNQRFPHIYQ). The chain crosses the membrane as a helical span at residues 475–495 (LANAFFSCVHFIYFLLYLSFA). Residues 496-503 (SFEKTKKE) lie on the Cytoplasmic side of the membrane.

This sequence belongs to the ALG6/ALG8 glucosyltransferase family.

The protein resides in the endoplasmic reticulum membrane. The enzyme catalyses an alpha-D-Man-(1-&gt;2)-alpha-D-Man-(1-&gt;2)-alpha-D-Man-(1-&gt;3)-[alpha-D-Man-(1-&gt;2)-alpha-D-Man-(1-&gt;3)-[alpha-D-Man-(1-&gt;2)-alpha-D-Man-(1-&gt;6)]-alpha-D-Man-(1-&gt;6)]-beta-D-Man-(1-&gt;4)-beta-D-GlcNAc-(1-&gt;4)-alpha-D-GlcNAc-diphospho-di-trans,poly-cis-dolichol + a di-trans,poly-cis-dolichyl beta-D-glucosyl phosphate = an alpha-D-Glc-(1-&gt;3)-alpha-D-Man-(1-&gt;2)-alpha-D-Man-(1-&gt;2)-alpha-D-Man-(1-&gt;3)-[alpha-D-Man-(1-&gt;2)-alpha-D-Man-(1-&gt;3)-[alpha-D-Man-(1-&gt;2)-alpha-D-Man-(1-&gt;6)]-alpha-D-Man-(1-&gt;6)]-beta-D-Man-(1-&gt;4)-beta-D-GlcNAc-(1-&gt;4)-alpha-D-GlcNAc-diphospho-di-trans,poly-cis-dolichol + a di-trans,poly-cis-dolichyl phosphate + H(+). It functions in the pathway protein modification; protein glycosylation. In terms of biological role, adds the first glucose residue to the lipid-linked oligosaccharide precursor for N-linked glycosylation. Transfers glucose from dolichyl phosphate glucose (Dol-P-Glc) onto the lipid-linked oligosaccharide Man(9)GlcNAc(2)-PP-Dol. This Caenorhabditis elegans protein is Probable dolichyl pyrophosphate Man9GlcNAc2 alpha-1,3-glucosyltransferase.